The sequence spans 88 residues: uncharacterized protein (88 aa).

This is an uncharacterized protein from Mycobacterium tuberculosis (strain CDC 1551 / Oshkosh).